We begin with the raw amino-acid sequence, 326 residues long: Holliday junction branch migration complex subunit RuvB (326 aa).

Residues 1–180 (MKSISCGKEY…FGIPLHLEFY (180 aa)) are large ATPase domain (RuvB-L). ATP-binding positions include Ile-19, Arg-20, Gly-61, Lys-64, Thr-65, Thr-66, 127-129 (EDF), Arg-170, Tyr-180, and Arg-217. A Mg(2+)-binding site is contributed by Thr-65. The small ATPAse domain (RuvB-S) stretch occupies residues 181 to 251 (SFEELVNIIK…VADSVLLKLG (71 aa)). The interval 254–326 (KMGLNKLDMN…QAKEYLSFQH (73 aa)) is head domain (RuvB-H). DNA-binding residues include Arg-307 and Arg-312.

The protein belongs to the RuvB family. In terms of assembly, homohexamer. Forms an RuvA(8)-RuvB(12)-Holliday junction (HJ) complex. HJ DNA is sandwiched between 2 RuvA tetramers; dsDNA enters through RuvA and exits via RuvB. An RuvB hexamer assembles on each DNA strand where it exits the tetramer. Each RuvB hexamer is contacted by two RuvA subunits (via domain III) on 2 adjacent RuvB subunits; this complex drives branch migration. In the full resolvosome a probable DNA-RuvA(4)-RuvB(12)-RuvC(2) complex forms which resolves the HJ.

The protein localises to the cytoplasm. It carries out the reaction ATP + H2O = ADP + phosphate + H(+). Functionally, the RuvA-RuvB-RuvC complex processes Holliday junction (HJ) DNA during genetic recombination and DNA repair, while the RuvA-RuvB complex plays an important role in the rescue of blocked DNA replication forks via replication fork reversal (RFR). RuvA specifically binds to HJ cruciform DNA, conferring on it an open structure. The RuvB hexamer acts as an ATP-dependent pump, pulling dsDNA into and through the RuvAB complex. RuvB forms 2 homohexamers on either side of HJ DNA bound by 1 or 2 RuvA tetramers; 4 subunits per hexamer contact DNA at a time. Coordinated motions by a converter formed by DNA-disengaged RuvB subunits stimulates ATP hydrolysis and nucleotide exchange. Immobilization of the converter enables RuvB to convert the ATP-contained energy into a lever motion, pulling 2 nucleotides of DNA out of the RuvA tetramer per ATP hydrolyzed, thus driving DNA branch migration. The RuvB motors rotate together with the DNA substrate, which together with the progressing nucleotide cycle form the mechanistic basis for DNA recombination by continuous HJ branch migration. Branch migration allows RuvC to scan DNA until it finds its consensus sequence, where it cleaves and resolves cruciform DNA. This chain is Holliday junction branch migration complex subunit RuvB, found in Wolbachia pipientis wMel.